A 499-amino-acid polypeptide reads, in one-letter code: Probable mitochondrial-processing peptidase subunit alpha-2, chloroplastic/mitochondrial (499 aa).

It belongs to the peptidase M16 family. In terms of assembly, heterodimer of alpha and beta subunits, forming the mitochondrial processing protease (MPP) in which subunit alpha is involved in substrate recognition and binding and subunit beta is the catalytic subunit. Component of the ubiquinol-cytochrome c oxidoreductase (cytochrome b-c1 complex, complex III, CIII), a multisubunit enzyme composed of 10 subunits. The complex is composed of 3 respiratory subunits cytochrome b (MT-CYB), cytochrome c1 (CYC1-1 or CYC1-2) and Rieske protein (UCR1-1 or UCR1-2), 2 core protein subunits MPPalpha1 (or MPPalpha2) and MPPB, and 5 low-molecular weight protein subunits QCR7-1 (or QCR7-2), UCRQ-1 (or UCRQ-2), QCR9, UCRY and probably QCR6-1 (or QCR6-2). The complex exists as an obligatory dimer and forms supercomplexes (SCs) in the inner mitochondrial membrane with NADH-ubiquinone oxidoreductase (complex I, CI), resulting in different assemblies (supercomplexes SCI(1)III(2) and SCI(2)III(4)). Interacts with TIM23-2.

Its subcellular location is the plastid. It is found in the chloroplast stroma. The protein resides in the mitochondrion matrix. It localises to the mitochondrion inner membrane. In terms of biological role, substrate recognition and binding subunit of the essential mitochondrial processing protease (MPP), which cleaves the mitochondrial sequence off newly imported precursors proteins. Its function is as follows. Component of the ubiquinol-cytochrome c oxidoreductase, a multisubunit transmembrane complex that is part of the mitochondrial electron transport chain which drives oxidative phosphorylation. The respiratory chain contains 3 multisubunit complexes succinate dehydrogenase (complex II, CII), ubiquinol-cytochrome c oxidoreductase (cytochrome b-c1 complex, complex III, CIII) and cytochrome c oxidase (complex IV, CIV), that cooperate to transfer electrons derived from NADH and succinate to molecular oxygen, creating an electrochemical gradient over the inner membrane that drives transmembrane transport and the ATP synthase. The cytochrome b-c1 complex catalyzes electron transfer from ubiquinol to cytochrome c, linking this redox reaction to translocation of protons across the mitochondrial inner membrane, with protons being carried across the membrane as hydrogens on the quinol. In the process called Q cycle, 2 protons are consumed from the matrix, 4 protons are released into the intermembrane space and 2 electrons are passed to cytochrome c. This Arabidopsis thaliana (Mouse-ear cress) protein is Probable mitochondrial-processing peptidase subunit alpha-2, chloroplastic/mitochondrial (MPPalpha2).